Consider the following 120-residue polypeptide: NAD(P)H-quinone oxidoreductase subunit 3, chloroplastic (120 aa).

The next 3 helical transmembrane spans lie at 9–29, 64–84, and 88–108; these read IFWA…FISG, MFAL…PWAM, and VLGV…IVGL.

The protein belongs to the complex I subunit 3 family. NDH is composed of at least 16 different subunits, 5 of which are encoded in the nucleus.

Its subcellular location is the plastid. It is found in the chloroplast thylakoid membrane. It carries out the reaction a plastoquinone + NADH + (n+1) H(+)(in) = a plastoquinol + NAD(+) + n H(+)(out). The enzyme catalyses a plastoquinone + NADPH + (n+1) H(+)(in) = a plastoquinol + NADP(+) + n H(+)(out). In terms of biological role, NDH shuttles electrons from NAD(P)H:plastoquinone, via FMN and iron-sulfur (Fe-S) centers, to quinones in the photosynthetic chain and possibly in a chloroplast respiratory chain. The immediate electron acceptor for the enzyme in this species is believed to be plastoquinone. Couples the redox reaction to proton translocation, and thus conserves the redox energy in a proton gradient. In Lactuca sativa (Garden lettuce), this protein is NAD(P)H-quinone oxidoreductase subunit 3, chloroplastic.